A 228-amino-acid polypeptide reads, in one-letter code: Geranylgeranylglyceryl phosphate synthase (228 aa).

Residue Lys-11 participates in sn-glycerol 1-phosphate binding. Mg(2+) is bound by residues Asp-13 and Thr-39. Sn-glycerol 1-phosphate is bound by residues 159–164, Gly-189, and 209–210; these read YIEYSG and GN.

The protein belongs to the GGGP/HepGP synthase family. Group I subfamily. Requires Mg(2+) as cofactor.

It localises to the cytoplasm. The catalysed reaction is sn-glycerol 1-phosphate + (2E,6E,10E)-geranylgeranyl diphosphate = sn-3-O-(geranylgeranyl)glycerol 1-phosphate + diphosphate. Its pathway is membrane lipid metabolism; glycerophospholipid metabolism. Functionally, prenyltransferase that catalyzes the transfer of the geranylgeranyl moiety of geranylgeranyl diphosphate (GGPP) to the C3 hydroxyl of sn-glycerol-1-phosphate (G1P). This reaction is the first ether-bond-formation step in the biosynthesis of archaeal membrane lipids. In Methanoregula boonei (strain DSM 21154 / JCM 14090 / 6A8), this protein is Geranylgeranylglyceryl phosphate synthase.